We begin with the raw amino-acid sequence, 302 residues long: Short-chain dehydrogenase/reductase 3 (302 aa).

4 consecutive transmembrane segments (helical) span residues 9–29 (LVMF…GLVL), 170–190 (IVCL…DYCT), 195–215 (AFAF…VSAT), and 253–273 (AVQL…LVIL). Residue S175 coordinates substrate. Y188 acts as the Proton acceptor in catalysis.

This sequence belongs to the short-chain dehydrogenases/reductases (SDR) family. In terms of tissue distribution, widely expressed with highest levels found in heart, placenta, lung, liver, kidney, pancreas, thyroid, testis, stomach, trachea and spinal cord. Lower levels found in skeletal muscle, intestine and lymph node. No expression detected in brain. In the retina, expressed in cone but not rod outer segments.

It is found in the membrane. It carries out the reaction all-trans-retinol + NADP(+) = all-trans-retinal + NADPH + H(+). Functionally, catalyzes the reduction of all-trans-retinal to all-trans-retinol in the presence of NADPH. The protein is Short-chain dehydrogenase/reductase 3 (DHRS3) of Homo sapiens (Human).